The following is a 354-amino-acid chain: Galactoside alpha-(1,2)-fucosyltransferase 2 (354 aa).

Residues 1-22 lie on the Cytoplasmic side of the membrane; sequence MRFAPDYVLCPPTATRRLRATH. A helical; Signal-anchor for type II membrane protein transmembrane segment spans residues 23-43; that stretch reads PSVSTIYFLFTIFVVSTVFHC. At 44–354 the chain is on the lumenal side; sequence HQRLALVPAP…NMGRALWSGL (311 aa). N-linked (GlcNAc...) asparagine glycosylation is found at Asn197, Asn291, and Asn317.

Belongs to the glycosyltransferase 11 family. As to expression, salivary and lactating mammary glands.

The protein localises to the golgi apparatus. It localises to the golgi stack membrane. It carries out the reaction a beta-D-galactosyl-(1-&gt;3)-N-acetyl-beta-D-glucosaminyl derivative + GDP-beta-L-fucose = an alpha-L-Fuc-(1-&gt;2)-beta-D-Gal-(1-&gt;3)-beta-D-GlcNAc derivative + GDP + H(+). The enzyme catalyses a beta-D-galactosyl-(1-&gt;4)-N-acetyl-beta-D-glucosaminyl derivative + GDP-beta-L-fucose = an alpha-L-Fuc-(1-&gt;2)-beta-D-Gal-(1-&gt;4)-beta-D-GlcNAc derivative + GDP + H(+). The catalysed reaction is a neolactoside nLc4Cer + GDP-beta-L-fucose = a neolactoside IV(2)-alpha-Fuc-nLc4Cer + GDP + H(+). It catalyses the reaction a neolactoside nLc4Cer(d18:1(4E)) + GDP-beta-L-fucose = a neolactoside IV(2)-alpha-Fuc-nLc4Cer(d18:1(4E)) + GDP + H(+). It carries out the reaction a ganglioside GM1 + GDP-beta-L-fucose = a ganglioside Fuc-GM1 + GDP + H(+). The enzyme catalyses a ganglioside GA1 + GDP-beta-L-fucose = a ganglioside Fuc-GA1 + GDP + H(+). The catalysed reaction is Lc4Cer + GDP-beta-L-fucose = alpha-L-fucosyl-(1-&gt;2)-beta-D-galactosyl-(1-&gt;3)-N-acetyl-beta-D-glucosaminyl-(1-&gt;3)-beta-D-galactosyl-(1-&gt;4)-beta-D-glucosyl-(1&lt;-&gt;1')-ceramide + GDP + H(+). It catalyses the reaction a beta-D-Gal-(1-&gt;3)-beta-D-GlcNAc-(1-&gt;3)-beta-D-Gal-(1-&gt;4)-beta-D-Glc-(1&lt;-&gt;1')-Cer(d18:1(4E)) + GDP-beta-L-fucose = alpha-L-fucosyl-(1-&gt;2)- beta-D-galactosyl-(1-&gt;3)-N-acetyl-beta-D-glucosaminyl-(1-&gt;3)-beta-D-galactosyl-(1-&gt;4)-beta-D-glucosyl-(1&lt;-&gt;1')-N-acylsphing-4-enine + GDP + H(+). It carries out the reaction a ganglioside GD1b + GDP-beta-L-fucose = a ganglioside Fuc-GD1b + GDP + H(+). The enzyme catalyses a ganglioside GM1 (d18:1(4E)) + GDP-beta-L-fucose = a ganglioside Fuc-GM1 (d18:1(4E)) + GDP + H(+). The catalysed reaction is a globoside GalGb4Cer (d18:1(4E)) + GDP-beta-L-fucose = a globoside Globo-H (d18:1(4E)) + GDP + H(+). It catalyses the reaction a lactoside III(4)-a-Fuc-Lc4Cer + GDP-beta-L-fucose = a lactoside IV(2),III(4)-a-[Fuc]2-Lc4Cer + GDP + H(+). It carries out the reaction beta-D-galactosyl-(1-&gt;3)-N-acetyl-D-galactosamine + GDP-beta-L-fucose = alpha-L-fucosyl-(1-&gt;2)-beta-D-galactosyl-(1-&gt;3)-N-acetyl-D-galactosamine + GDP + H(+). It functions in the pathway protein modification; protein glycosylation. Its function is as follows. Catalyzes the transfer of L-fucose, from a guanosine diphosphate-beta-L-fucose, to the terminal galactose on both O- and N-linked glycans chains of cell surface glycoproteins and glycolipids and the resulting epitope regulates several processes such as cell-cell interaction including host-microbe interaction, cell surface expression and cell proliferation. Preferentially fucosylates gangliosides GA1 and GM1 in the antrum, cecum and colon and in the female reproductive organs. Fucosylated host glycoproteins or glycolipids mediate interaction with intestinal microbiota influencing its composition. Creates a soluble precursor oligosaccharide FuC-alpha ((1,2)Galbeta-) called the H antigen which is an essential substrate for the final step in the soluble ABO blood group antigen synthesis pathway. The protein is Galactoside alpha-(1,2)-fucosyltransferase 2 of Oryctolagus cuniculus (Rabbit).